The primary structure comprises 158 residues: NADH-quinone oxidoreductase subunit B 1 (158 aa).

[4Fe-4S] cluster-binding residues include C37, C38, C102, and C132.

This sequence belongs to the complex I 20 kDa subunit family. In terms of assembly, NDH-1 is composed of 14 different subunits. Subunits NuoB, C, D, E, F, and G constitute the peripheral sector of the complex. The cofactor is [4Fe-4S] cluster.

The protein localises to the cell inner membrane. The enzyme catalyses a quinone + NADH + 5 H(+)(in) = a quinol + NAD(+) + 4 H(+)(out). In terms of biological role, NDH-1 shuttles electrons from NADH, via FMN and iron-sulfur (Fe-S) centers, to quinones in the respiratory chain. Couples the redox reaction to proton translocation (for every two electrons transferred, four hydrogen ions are translocated across the cytoplasmic membrane), and thus conserves the redox energy in a proton gradient. In Chromobacterium violaceum (strain ATCC 12472 / DSM 30191 / JCM 1249 / CCUG 213 / NBRC 12614 / NCIMB 9131 / NCTC 9757 / MK), this protein is NADH-quinone oxidoreductase subunit B 1.